A 35-amino-acid chain; its full sequence is Mu-theraphotoxin-Pn3b (35 aa).

3 cysteine pairs are disulfide-bonded: Cys2–Cys16, Cys9–Cys21, and Cys15–Cys28.

It belongs to the neurotoxin 10 (Hwtx-1) family. 28 (Jztx-11) subfamily. As to expression, expressed by the venom gland.

The protein localises to the secreted. Functionally, gating-modifier toxin that targets voltage-gated sodium channels with a preferential activity on Nav1.7/SCN9A. On Nav1.7/SCN9A, the toxin acts by shifting the voltage-dependence of activation to more depolarized potentials, whereas it does not cause significant effect on the voltage-dependence of activation on other sodium channels. Minor effects are observed on the voltage-dependence of steady-state fast inactivation for all sodium channels tested (Nav1.1/SCN1A-Nav1.8/SCN10A). By testing the toxin on channel chimera, it has been shown to interact with the S3-S4 linkers in DII and DIV domains of Nav1.7/SCN9A. In vivo, the toxin dose-dependently reduces OD1-induced spontaneous pain behaviors. In Pamphobeteus nigricolor (Giant blue bloom tarantula), this protein is Mu-theraphotoxin-Pn3b.